A 461-amino-acid polypeptide reads, in one-letter code: MEQMEMDESRGGTGLRQYYLSKIEDLQLVVNDKSQNLRRLQAQRNELNAKVRLLREELQLLQEQGSYVGEVVRAMDKKKVLVKVHPEGKFVVDVDKNIDINDVTPNCRVALRNDSYTLHKILPNKVDPLVSLMMVEKVPDSTYEMIGGLDKQIKEIKEVIELPVKHPEHFEALGIAQPKGVLLYGPPGTGKTLLARAVAHHTDCTFIRVSGSELVQKFIGEGARMVRELFVMAREHAPSIIFMDEIDSIGSRLEGGSGGDSEVQRTMLELLNQLDGFEATKNIKVIMATNRIDILDSALLRPGRIDRKIEFPPPNEEARLDILKIHSRKMNLTRGINLRKIAELMPGASGAEVKGVCTEAGMYALRERRVHVTQEDFEMAVAKVMQKDSEKNMSIKKLWKCFFLVPILCSTVCFQLKPSDVYYMGAWLIKPTRFNRRIITNSYHLQIFKPTIVLANGECHN.

185–192 contributes to the ATP binding site; the sequence is GPPGTGKT.

It belongs to the AAA ATPase family.

Its subcellular location is the cytoplasm. The protein localises to the nucleus. Functionally, the 26S proteasome is involved in the ATP-dependent degradation of ubiquitinated proteins. The regulatory (or ATPase) complex confers ATP dependency and substrate specificity to the 26S complex. The sequence is that of 26S proteasome regulatory subunit 8 (psmc5) from Xenopus laevis (African clawed frog).